We begin with the raw amino-acid sequence, 430 residues long: Tol-Pal system protein TolB (430 aa).

Positions 1 to 21 are cleaved as a signal peptide; sequence MKQALRVAFGFLILWASVLHA.

Belongs to the TolB family. In terms of assembly, the Tol-Pal system is composed of five core proteins: the inner membrane proteins TolA, TolQ and TolR, the periplasmic protein TolB and the outer membrane protein Pal. They form a network linking the inner and outer membranes and the peptidoglycan layer.

It is found in the periplasm. Functionally, part of the Tol-Pal system, which plays a role in outer membrane invagination during cell division and is important for maintaining outer membrane integrity. TolB occupies a key intermediary position in the Tol-Pal system because it communicates directly with both membrane-embedded components, Pal in the outer membrane and TolA in the inner membrane. The sequence is that of Tol-Pal system protein TolB from Shigella dysenteriae serotype 1 (strain Sd197).